Reading from the N-terminus, the 193-residue chain is DNA dC-&gt;dU-editing enzyme APOBEC-3H (193 aa).

Residues 24-126 (YRRKTYLCYQ…WKYQQGLRHL (103 aa)) enclose the CMP/dCMP-type deaminase domain. H54 contacts Zn(2+). Catalysis depends on E56, which acts as the Proton donor. Residues C85 and C88 each contribute to the Zn(2+) site.

Belongs to the cytidine and deoxycytidylate deaminase family. In terms of assembly, homodimer. Zn(2+) is required as a cofactor. Expressed in peripheral blood mononuclear cells.

It is found in the cytoplasm. The catalysed reaction is a 2'-deoxycytidine in single-stranded DNA + H2O + H(+) = a 2'-deoxyuridine in single-stranded DNA + NH4(+). DNA deaminase (cytidine deaminase) which acts as an inhibitor of retrovirus replication and retrotransposon mobility via deaminase-dependent and -independent mechanisms. Selectively targets single-stranded DNA and does not deaminate double-stranded DNA or single- or double-stranded RNA. Exhibits single-stranded DNA deaminase activity (in vitro). Incorporates into the released virions of the virion infectivity factor (vif)-deficient feline immunodeficiency virus (FIV) and suppresses FIV infectivity, probably in a deaminase-dependent manner (in vitro). Induces G-to-A hypermutations in vif-deficient FIV (in vitro). The APOBEC3H/APOBEC3Z3 haplotype 5 exhibits antiviral activity against vif-proficient FIV, strains Petaluma, C36 and Shizuoka (in vitro). Does not exhibit inhibitory activity against feline leukemia virus (FeLV), feline endogenous retrovirus (RD-114 virus) or a long interspersed nuclear element-1 (LINE-1) retrotransposon (in vitro). The protein is DNA dC-&gt;dU-editing enzyme APOBEC-3H of Felis catus (Cat).